Reading from the N-terminus, the 122-residue chain is Large ribosomal subunit protein uL14c (122 aa).

The protein belongs to the universal ribosomal protein uL14 family. In terms of assembly, part of the 50S ribosomal subunit.

The protein localises to the plastid. The protein resides in the chloroplast. Binds to 23S rRNA. In Zygnema circumcarinatum (Green alga), this protein is Large ribosomal subunit protein uL14c.